Consider the following 184-residue polypeptide: ATP synthase subunit b, chloroplastic (184 aa).

Residues L27–L49 traverse the membrane as a helical segment.

It belongs to the ATPase B chain family. In terms of assembly, F-type ATPases have 2 components, F(1) - the catalytic core - and F(0) - the membrane proton channel. F(1) has five subunits: alpha(3), beta(3), gamma(1), delta(1), epsilon(1). F(0) has four main subunits: a(1), b(1), b'(1) and c(10-14). The alpha and beta chains form an alternating ring which encloses part of the gamma chain. F(1) is attached to F(0) by a central stalk formed by the gamma and epsilon chains, while a peripheral stalk is formed by the delta, b and b' chains.

The protein localises to the plastid. It is found in the chloroplast thylakoid membrane. Its function is as follows. F(1)F(0) ATP synthase produces ATP from ADP in the presence of a proton or sodium gradient. F-type ATPases consist of two structural domains, F(1) containing the extramembraneous catalytic core and F(0) containing the membrane proton channel, linked together by a central stalk and a peripheral stalk. During catalysis, ATP synthesis in the catalytic domain of F(1) is coupled via a rotary mechanism of the central stalk subunits to proton translocation. Component of the F(0) channel, it forms part of the peripheral stalk, linking F(1) to F(0). The sequence is that of ATP synthase subunit b, chloroplastic from Lepidium virginicum (Virginia pepperweed).